The sequence spans 255 residues: MQQEEIIEGYYGASKGLKKSGIYAKLDFLQSATGLILALFMIAHMFLVSSILISDEAMYKVAKFFEGSLFLKAGEPAIVSVVAAGVILILVAHAFLALRKFPINYRQYKVFKTHKHLMKHGDTSLWFIQALTGFAMFFLASIHLFVMLTEPESIGPHGSSYRFVTQNFWLLYIFLLFAVELHGSIGLYRLAIKWGWFKNVSIQGLRKIKWAMSVFFIVLGLCTYGAYIKKGLENKDNGIKTMQEAIEADGKFHKE.

5 helical membrane passes run threonine 33 to isoleucine 53, isoleucine 78 to leucine 98, tryptophan 126 to valine 146, phenylalanine 168 to tyrosine 188, and isoleucine 208 to isoleucine 228. 4 residues coordinate heme b: histidine 44, histidine 93, histidine 143, and histidine 182.

This sequence belongs to the diheme cytochrome b FrdC family. As to quaternary structure, part of an enzyme complex containing three subunits: a flavoprotein (frdA), an iron-sulfur protein (frdB), and diheme cytochrome b (frdC). It depends on heme b as a cofactor.

The protein resides in the cell inner membrane. Its function is as follows. The fumarate reductase enzyme complex is required for fumarate respiration. This subunit anchors the complex in the membrane and binds a diheme cytochrome b. This is Fumarate reductase cytochrome b subunit (frdC) from Helicobacter pylori (strain J99 / ATCC 700824) (Campylobacter pylori J99).